Here is an 81-residue protein sequence, read N- to C-terminus: Beta-catenin-interacting protein 1 (81 aa).

Phosphoserine is present on S59.

Belongs to the CTNNBIP1 family. As to quaternary structure, binds CTNNB1. As to expression, highly expressed in heart, brain, liver and skeletal muscle. Detected at low levels in kidney, testis and lung.

The protein resides in the cytoplasm. The protein localises to the nucleus. Its function is as follows. Prevents the interaction between CTNNB1 and TCF family members, and acts as a negative regulator of the Wnt signaling pathway. This Mus musculus (Mouse) protein is Beta-catenin-interacting protein 1 (Ctnnbip1).